Consider the following 385-residue polypeptide: Succinate--CoA ligase [ADP-forming] subunit beta (385 aa).

An ATP-grasp domain is found at 9–244; sequence KEVLRKYGVS…LDEEDPKEIE (236 aa). ATP is bound by residues Lys-46, 53–55, Glu-99, Cys-102, and Glu-107; that span reads GRG. Mg(2+)-binding residues include Asn-199 and Asp-213. Ser-220 is modified (phosphoserine). Substrate is bound by residues Asn-264 and 321–323; that span reads GIM.

Belongs to the succinate/malate CoA ligase beta subunit family. In terms of assembly, heterotetramer of two alpha and two beta subunits. Interacts with BrxC. It depends on Mg(2+) as a cofactor.

It catalyses the reaction succinate + ATP + CoA = succinyl-CoA + ADP + phosphate. It carries out the reaction GTP + succinate + CoA = succinyl-CoA + GDP + phosphate. Its pathway is carbohydrate metabolism; tricarboxylic acid cycle; succinate from succinyl-CoA (ligase route): step 1/1. In terms of biological role, succinyl-CoA synthetase functions in the citric acid cycle (TCA), coupling the hydrolysis of succinyl-CoA to the synthesis of either ATP or GTP and thus represents the only step of substrate-level phosphorylation in the TCA. The beta subunit provides nucleotide specificity of the enzyme and binds the substrate succinate, while the binding sites for coenzyme A and phosphate are found in the alpha subunit. The protein is Succinate--CoA ligase [ADP-forming] subunit beta of Bacillus subtilis (strain 168).